The sequence spans 582 residues: Insulin-like growth factor 2 mRNA-binding protein 3 (582 aa).

2 RRM domains span residues 2 to 75 (NKLY…HSVP) and 81 to 156 (CKLQ…YIPD). The tract at residues 164-190 (PAVGGRRGFNPRGPPRQGSPSLGARPK) is disordered. A Phosphoserine modification is found at S182. KH domains follow at residues 194–259 (DVPL…CRNI), 275–342 (EIPL…EEEI), 408–473 (SETV…QGRI), and 490–556 (KLEA…QRKI). The tract at residues 562–582 (QVRRQQQPKPSAAGPPVARRK) is disordered.

This sequence belongs to the RRM IMP/VICKZ family. In terms of assembly, homodimer and multimer.

It is found in the cytoplasm. Its subcellular location is the nucleus. The protein localises to the P-body. It localises to the stress granule. RNA-binding factor that may recruit target transcripts to cytoplasmic protein-RNA complexes (mRNPs). This transcript 'caging' into mRNPs allows mRNA transport and transient storage. It also modulates the rate and location at which target transcripts encounter the translational apparatus and shields them from endonuclease attacks or microRNA-mediated degradation. Preferentially binds to N6-methyladenosine (m6A)-containing mRNAs and increases their stability. Involved in neuronal crest migration. This Danio rerio (Zebrafish) protein is Insulin-like growth factor 2 mRNA-binding protein 3 (igf2bp3).